The following is a 213-amino-acid chain: Ribosomal RNA large subunit methyltransferase E (213 aa).

The S-adenosyl-L-methionine site is built by glycine 68, tryptophan 70, aspartate 88, aspartate 104, and aspartate 127. The Proton acceptor role is filled by lysine 167.

Belongs to the class I-like SAM-binding methyltransferase superfamily. RNA methyltransferase RlmE family.

The protein localises to the cytoplasm. It carries out the reaction uridine(2552) in 23S rRNA + S-adenosyl-L-methionine = 2'-O-methyluridine(2552) in 23S rRNA + S-adenosyl-L-homocysteine + H(+). Its function is as follows. Specifically methylates the uridine in position 2552 of 23S rRNA at the 2'-O position of the ribose in the fully assembled 50S ribosomal subunit. This chain is Ribosomal RNA large subunit methyltransferase E, found in Neorickettsia sennetsu (strain ATCC VR-367 / Miyayama) (Ehrlichia sennetsu).